The sequence spans 208 residues: Large ribosomal subunit protein uL3 (208 aa).

The segment at 123–147 (RHGQSRGPMAHGSRYHRRPGSMGPV) is disordered.

It belongs to the universal ribosomal protein uL3 family. As to quaternary structure, part of the 50S ribosomal subunit. Forms a cluster with proteins L14 and L19.

In terms of biological role, one of the primary rRNA binding proteins, it binds directly near the 3'-end of the 23S rRNA, where it nucleates assembly of the 50S subunit. This Streptococcus sanguinis (strain SK36) protein is Large ribosomal subunit protein uL3.